Consider the following 56-residue polypeptide: Large ribosomal subunit protein bL33 (56 aa).

Belongs to the bacterial ribosomal protein bL33 family.

The chain is Large ribosomal subunit protein bL33 from Rickettsia africae (strain ESF-5).